Consider the following 99-residue polypeptide: U1-theraphotoxin-Lsp1c (99 aa).

The N-terminal stretch at 1 to 23 (MRKITIRALLLCSLLLVFHTSAA) is a signal peptide. Positions 24-50 (AELQAQEGHLMIPGDTDTALETVDDER) are excised as a propeptide. Disulfide bonds link Cys-54/Cys-67, Cys-58/Cys-91, Cys-72/Cys-74, and Cys-85/Cys-96.

Belongs to the neurotoxin 12 (Hwtx-2) family. 04 (lasiotoxin) subfamily. Expressed by the venom gland.

The protein localises to the secreted. In terms of biological role, toxin that causes irreversible contractile paralysis into adult Aedes aegypti resulting in 100% mortality after 24 hours. This Lasiodora sp. (strain IBSP 8539) (Brazilian salmon pink birdeater) protein is U1-theraphotoxin-Lsp1c.